We begin with the raw amino-acid sequence, 447 residues long: Argininosuccinate synthase (447 aa).

ATP contacts are provided by residues 17–25 (AFSGGLDTS) and Ala-43. Residue Tyr-99 participates in L-citrulline binding. Gly-129 and Thr-131 together coordinate ATP. Thr-131, Asn-135, and Asp-136 together coordinate L-aspartate. Residue Asn-135 coordinates L-citrulline. Asp-136 provides a ligand contact to ATP. Positions 139 and 192 each coordinate L-citrulline. Residue Asp-194 participates in ATP binding. Positions 201, 203, and 280 each coordinate L-citrulline.

Belongs to the argininosuccinate synthase family. Type 2 subfamily. As to quaternary structure, homotetramer.

The protein resides in the cytoplasm. The catalysed reaction is L-citrulline + L-aspartate + ATP = 2-(N(omega)-L-arginino)succinate + AMP + diphosphate + H(+). It participates in amino-acid biosynthesis; L-arginine biosynthesis; L-arginine from L-ornithine and carbamoyl phosphate: step 2/3. In Escherichia coli (strain K12 / MC4100 / BW2952), this protein is Argininosuccinate synthase.